Reading from the N-terminus, the 278-residue chain is Large ribosomal subunit protein uL2 (278 aa).

2 disordered regions span residues 29–57 and 224–278; these read PEKS…QGGG and VAMN…NKKR. Residues 258 to 278 show a composition bias toward basic residues; sequence RSPKKASNKYIVRRRKTNKKR.

It belongs to the universal ribosomal protein uL2 family. In terms of assembly, part of the 50S ribosomal subunit. Forms a bridge to the 30S subunit in the 70S ribosome.

One of the primary rRNA binding proteins. Required for association of the 30S and 50S subunits to form the 70S ribosome, for tRNA binding and peptide bond formation. It has been suggested to have peptidyltransferase activity; this is somewhat controversial. Makes several contacts with the 16S rRNA in the 70S ribosome. The sequence is that of Large ribosomal subunit protein uL2 from Streptomyces griseus subsp. griseus (strain JCM 4626 / CBS 651.72 / NBRC 13350 / KCC S-0626 / ISP 5235).